The sequence spans 1622 residues: Ferredoxin-dependent glutamate synthase 1, chloroplastic/mitochondrial (1622 aa).

The N-terminal 105 residues, 1 to 105, are a transit peptide targeting the chloroplast and mitochondrion; that stretch reads MAMQSLSPVP…LEDILSERGA (105 aa). C106 functions as the For GATase activity in the catalytic mechanism. The 400-residue stretch at 106 to 505 folds into the Glutamine amidotransferase type-2 domain; sequence CGVGFIANLD…PGMMIAVDLV (400 aa). 1184 to 1241 is an FMN binding site; the sequence is LTETHQTLIANGLRERVILRVDGGLKSGVDVLMAAAMGADEYGFGSLAMIATGCVMAR. Residues C1237, C1243, and C1248 each coordinate [3Fe-4S] cluster.

Belongs to the glutamate synthase family. Interacts with SHM1. Requires [3Fe-4S] cluster as cofactor. It depends on FAD as a cofactor. The cofactor is FMN. Highly expressed in leaves. High expression in the leaf mesophyll and phloem companion cell-sieve element complex.

Its subcellular location is the plastid. The protein localises to the chloroplast stroma. It is found in the mitochondrion matrix. It carries out the reaction 2 oxidized [2Fe-2S]-[ferredoxin] + 2 L-glutamate = L-glutamine + 2 reduced [2Fe-2S]-[ferredoxin] + 2-oxoglutarate + 2 H(+). It functions in the pathway amino-acid biosynthesis; L-glutamate biosynthesis via GLT pathway; L-glutamate from 2-oxoglutarate and L-glutamine (ferredoxin route): step 1/1. It participates in energy metabolism; nitrogen metabolism. Its function is as follows. Involved in glutamate biosynthesis in leaf. Required for the reassimilation of ammonium ions generated during photorespiration. The protein is Ferredoxin-dependent glutamate synthase 1, chloroplastic/mitochondrial of Arabidopsis thaliana (Mouse-ear cress).